Reading from the N-terminus, the 271-residue chain is Tryptophan synthase alpha chain (271 aa).

Catalysis depends on proton acceptor residues E59 and D70.

Belongs to the TrpA family. As to quaternary structure, tetramer of two alpha and two beta chains.

The enzyme catalyses (1S,2R)-1-C-(indol-3-yl)glycerol 3-phosphate + L-serine = D-glyceraldehyde 3-phosphate + L-tryptophan + H2O. It functions in the pathway amino-acid biosynthesis; L-tryptophan biosynthesis; L-tryptophan from chorismate: step 5/5. In terms of biological role, the alpha subunit is responsible for the aldol cleavage of indoleglycerol phosphate to indole and glyceraldehyde 3-phosphate. In Methanosarcina mazei (strain ATCC BAA-159 / DSM 3647 / Goe1 / Go1 / JCM 11833 / OCM 88) (Methanosarcina frisia), this protein is Tryptophan synthase alpha chain.